Here is a 524-residue protein sequence, read N- to C-terminus: GMP synthase [glutamine-hydrolyzing] (524 aa).

Residues 9 to 207 (RILILDFSSQ…VIHICQCIPN (199 aa)) enclose the Glutamine amidotransferase type-1 domain. Cys-86 acts as the Nucleophile in catalysis. Residues His-181 and Glu-183 contribute to the active site. The GMPS ATP-PPase domain occupies 208–399 (WTTKHIIEDS…LGLPADLIYR (192 aa)). 235 to 241 (SGGVDSA) contributes to the ATP binding site.

Homodimer.

It carries out the reaction XMP + L-glutamine + ATP + H2O = GMP + L-glutamate + AMP + diphosphate + 2 H(+). It functions in the pathway purine metabolism; GMP biosynthesis; GMP from XMP (L-Gln route): step 1/1. In terms of biological role, catalyzes the synthesis of GMP from XMP. The sequence is that of GMP synthase [glutamine-hydrolyzing] from Coxiella burnetii (strain Dugway 5J108-111).